Reading from the N-terminus, the 228-residue chain is Leucine rich adaptor protein 1-like (228 aa).

M1 is subject to N-acetylmethionine. The tract at residues M1–A89 is disordered. Basic and acidic residues-rich tracts occupy residues D8–P21 and L28–P42. Residues G44–C56 are compositionally biased toward gly residues. Residues S57–S88 show a composition bias toward low complexity.

The chain is Leucine rich adaptor protein 1-like (LURAP1L) from Homo sapiens (Human).